The sequence spans 256 residues: Tumor necrosis factor receptor superfamily member 9 (256 aa).

The signal sequence occupies residues 1-23 (MGNNCYNVVVIVLLLVGCEKVGA). 4 TNFR-Cys repeats span residues 24 to 45 (VQNS…PVCK), 46 to 85 (SCPP…NAEC), 86 to 117 (ECIE…QGCK), and 118 to 159 (TCSL…VVCG). Residues 24-187 (VQNSCDNCQP…GPGGHSLQVL (164 aa)) are Extracellular-facing. 9 disulfides stabilise this stretch: Cys-28/Cys-37, Cys-31/Cys-44, Cys-47/Cys-61, Cys-64/Cys-77, Cys-67/Cys-85, Cys-87/Cys-93, Cys-98/Cys-105, Cys-101/Cys-116, and Cys-119/Cys-133. N-linked (GlcNAc...) asparagine glycosylation is found at Asn-128 and Asn-138. Cys-139 and Cys-158 are disulfide-bonded. Residues 188 to 208 (TLFLALTSALLLALIFITLLF) traverse the membrane as a helical segment. The Cytoplasmic segment spans residues 209–256 (SVLKWIRKKFPHIFKQPFKKTTGAAQEEDACSCRCPQEEEGGGGGYEL).

Predominantly homodimeric, but may also exist as a monomer. Associates with p56-LCK. Interacts with TRAF1, TRAF2 and TRAF3. Expressed in activated thymocytes, splenic T cells, CD4(+), and CD8(+) T-cells.

It localises to the cell membrane. Functionally, receptor for TNFSF9/4-1BBL. Conveys a signal that enhances CD8(+) T-cell survival, cytotoxicity, and mitochondrial activity, thereby promoting immunity against viruses and tumors. This is Tumor necrosis factor receptor superfamily member 9 (Tnfrsf9) from Mus musculus (Mouse).